A 252-amino-acid chain; its full sequence is Petrobactin import ATP-binding protein YclP (252 aa).

Positions 2–236 (VEVRNVSKQY…SVLEEIYDMT (235 aa)) constitute an ABC transporter domain. 34–41 (GPNGAGKS) lines the ATP pocket.

This sequence belongs to the ABC transporter superfamily. In terms of assembly, the complex is composed of two ATP-binding proteins (YclP), two transmembrane proteins (YclN and YclO) and a solute-binding protein (YclQ).

It is found in the cell membrane. It carries out the reaction a Fe(III)-siderophore(out) + ATP + H2O = a Fe(III)-siderophore(in) + ADP + phosphate + H(+). Part of the ABC transporter complex YclNOPQ involved in uptake of ferric-petrobactin. Petrobactin is a photoreactive 3,4-catecholate siderophore produced by many members of the B.cereus group, including B.anthracis. Probably responsible for energy coupling to the transport system. The polypeptide is Petrobactin import ATP-binding protein YclP (yclP) (Bacillus subtilis (strain 168)).